The sequence spans 353 residues: Melanin-concentrating hormone receptor 1 (353 aa).

The segment at 1 to 28 is disordered; it reads MDLEASLLPTGPNASNTSDGPDNLTSAG. The Extracellular segment spans residues 1-45; sequence MDLEASLLPTGPNASNTSDGPDNLTSAGPPPRTGSISYVNIIMPS. The span at 12-26 shows a compositional bias: polar residues; sequence PNASNTSDGPDNLTS. 3 N-linked (GlcNAc...) asparagine glycosylation sites follow: asparagine 13, asparagine 16, and asparagine 23. A helical transmembrane segment spans residues 46–66; sequence VFGTICLLGIIGNSMVIFAVV. The Cytoplasmic portion of the chain corresponds to 67–79; that stretch reads KKSKLHWFSNVPD. A helical transmembrane segment spans residues 80 to 100; that stretch reads IFIINLSVVDLLFLLGMPFMI. Topologically, residues 101–116 are extracellular; the sequence is HQLMGNGVWHFGETMC. A disulfide bridge links cysteine 116 with cysteine 194. A helical membrane pass occupies residues 117–139; that stretch reads TLITAMDANSQFTSTYILTAMAI. Residues 140-161 are Cytoplasmic-facing; it reads DRYLATVHPISSTRFRKPSVAT. The helical transmembrane segment at 162–182 threads the bilayer; that stretch reads LVICLLWALSIISITPVWLYA. The Extracellular segment spans residues 183–204; sequence RLIPFPGGTVGCGIRLPNPDTD. Residues 205–225 traverse the membrane as a helical segment; the sequence is LYWFTLYQFFLAFALPFVVIT. The Cytoplasmic portion of the chain corresponds to 226-256; sequence AAYVRILQRMTSSVAPASQRSIRLRTKRVTR. A helical transmembrane segment spans residues 257 to 277; the sequence is TAIAICLVFFVCWAPYYVLQL. Residues 278–294 are Extracellular-facing; the sequence is TQLSISRPTLTFVYLYN. The helical transmembrane segment at 295–315 threads the bilayer; that stretch reads AAISLGYANSCLNPFVYIVLC. At 316 to 353 the chain is on the cytoplasmic side; it reads ETFRKRLVLSVKPAAQGQLRAVSNAQTAEEERTESKGT.

It belongs to the G-protein coupled receptor 1 family. Interacts with NCDN.

It is found in the cell membrane. Functionally, receptor for melanin-concentrating hormone, coupled to both G proteins that inhibit adenylyl cyclase and G proteins that activate phosphoinositide hydrolysis. This chain is Melanin-concentrating hormone receptor 1, found in Sus scrofa (Pig).